Consider the following 301-residue polypeptide: Phosducin-like protein (301 aa).

T2 is modified (N-acetylthreonine). Residues 15-53 (YYYSSSEEEDSDHEDKDRGRGALAGSSMPADADLAGEGI) form a disordered region. S20, S25, S226, S293, and S296 each carry phosphoserine. A Phosducin domain is found at 37 to 299 (LAGSSMPADA…TCHSEDSDLE (263 aa)). The segment at 158–301 (FKQVFEIPSG…HSEDSDLEID (144 aa)) is thioredoxin fold.

Belongs to the phosducin family. Forms a complex with the beta and gamma subunits of the GTP-binding protein, transducin. Interacts with the CCT chaperonin complex.

It localises to the cell projection. The protein localises to the cilium. Functionally, functions as a co-chaperone for CCT in the assembly of heterotrimeric G protein complexes, facilitates the assembly of both Gbeta-Ggamma and RGS-Gbeta5 heterodimers. Also acts as a positive regulator of hedgehog signaling and regulates ciliary function. This chain is Phosducin-like protein (PDCL), found in Bos taurus (Bovine).